A 236-amino-acid polypeptide reads, in one-letter code: Large ribosomal subunit protein uL1 (236 aa).

This sequence belongs to the universal ribosomal protein uL1 family. Part of the 50S ribosomal subunit.

Functionally, binds directly to 23S rRNA. The L1 stalk is quite mobile in the ribosome, and is involved in E site tRNA release. In terms of biological role, protein L1 is also a translational repressor protein, it controls the translation of the L11 operon by binding to its mRNA. This is Large ribosomal subunit protein uL1 from Heliobacterium modesticaldum (strain ATCC 51547 / Ice1).